Here is a 346-residue protein sequence, read N- to C-terminus: Trans-enoyl reductase FFUJ_12240 (346 aa).

40 to 43 (HDAK) contributes to the NADP(+) binding site. 124–131 (LAIATAGL) is a binding site for substrate. Residues 157–160 (ATAT), 180–183 (SPSN), Tyr-198, and 245–246 (LE) each bind NADP(+). 266–270 (APSIL) contacts substrate. An NADP(+)-binding site is contributed by 335-336 (VH).

This sequence belongs to the zinc-containing alcohol dehydrogenase family.

Its function is as follows. Trans-enoyl reductase; part of the gene cluster that mediates the biosynthesis of fujikurins A-D, secondary metabolites playing a role during rice infection. The polyketide synthase PKS19 acts with the trans-enoyl reductase FFUJ_12240 and the polyketide transferase FFUJ_12241 to produce fujikurins, however, the biosynthesis pathway has not been identified yet. This chain is Trans-enoyl reductase FFUJ_12240, found in Gibberella fujikuroi (strain CBS 195.34 / IMI 58289 / NRRL A-6831) (Bakanae and foot rot disease fungus).